A 422-amino-acid chain; its full sequence is Histidine--tRNA ligase (422 aa).

Belongs to the class-II aminoacyl-tRNA synthetase family. As to quaternary structure, homodimer.

The protein localises to the cytoplasm. The enzyme catalyses tRNA(His) + L-histidine + ATP = L-histidyl-tRNA(His) + AMP + diphosphate + H(+). The protein is Histidine--tRNA ligase (hisS) of Photobacterium profundum (strain SS9).